Reading from the N-terminus, the 604-residue chain is Asparagine synthetase [glutamine-hydrolyzing] 1 (604 aa).

Catalysis depends on C2, which acts as the Nucleophile. In terms of domain architecture, Glutamine amidotransferase type-2 spans 2–186 (CGILAVLGAA…PGHLYSSAAG (185 aa)). Residues 50–54 (RLAIV), 75–77 (NGE), and D99 contribute to the L-glutamine site. The 241-residue stretch at 211–451 (LREAFEKAVI…LPKHILYRQK (241 aa)) folds into the Asparagine synthetase domain. Residues L232, V268, and 342-343 (SG) contribute to the ATP site.

It carries out the reaction L-aspartate + L-glutamine + ATP + H2O = L-asparagine + L-glutamate + AMP + diphosphate + H(+). It participates in amino-acid biosynthesis; L-asparagine biosynthesis. Its function is as follows. Essential for nitrogen assimilation, distribution and remobilization within the plant via the phloem. The sequence is that of Asparagine synthetase [glutamine-hydrolyzing] 1 from Oryza sativa subsp. japonica (Rice).